The primary structure comprises 48 residues: Osteocalcin (48 aa).

The Gla domain maps to 1–46; sequence SFAVGSSYGAAPDPLEAQREVCELNPDCDELADHIGFQEAYRRFYG. 4 residues coordinate Ca(2+): glutamate 16, glutamate 20, glutamate 23, and aspartate 29. 4-carboxyglutamate is present on residues glutamate 16, glutamate 20, and glutamate 23. Cysteine 22 and cysteine 28 are oxidised to a cystine.

It belongs to the osteocalcin/matrix Gla protein family. Gamma-carboxyglutamate residues are formed by vitamin K dependent carboxylation by GGCX. These residues are essential for the binding of calcium.

It is found in the secreted. Its function is as follows. The carboxylated form is one of the main organic components of the bone matrix, which constitutes 1-2% of the total bone protein. The carboxylated form binds strongly to apatite and calcium. The chain is Osteocalcin (BGLAP) from Dromaius novaehollandiae (Emu).